Reading from the N-terminus, the 93-residue chain is MKVAVAALAVLLCAMALCSQVFSAPFGADTPTACCFSYVARQLSRKIVADYFETSSQCSKPGVIFQTKKGRQVCANPTEDWVQEYITDLELNA.

An N-terminal signal peptide occupies residues Met1–Ala24. Intrachain disulfides connect Cys34–Cys58 and Cys35–Cys74.

The protein belongs to the intercrine beta (chemokine CC) family. Self-associates. Also heterodimer of MIP-1-alpha(4-69) and MIP-1-beta(3-69). Interacts with CCR1.

Its subcellular location is the secreted. In terms of biological role, monokine with inflammatory and chemokinetic properties. Binds to CCR1, CCR4 and CCR5. One of the major HIV-suppressive factors produced by CD8+ T-cells. Recombinant MIP-1-alpha induces a dose-dependent inhibition of different strains of HIV-1, HIV-2, and simian immunodeficiency virus (SIV). The chain is C-C motif chemokine 3 (CCL3) from Bos taurus (Bovine).